A 529-amino-acid polypeptide reads, in one-letter code: uncharacterized protein (529 aa).

The protein to M.jannaschii MJ1451.

This is an uncharacterized protein from Methanothermobacter thermautotrophicus (strain ATCC 29096 / DSM 1053 / JCM 10044 / NBRC 100330 / Delta H) (Methanobacterium thermoautotrophicum).